We begin with the raw amino-acid sequence, 652 residues long: DNA ligase (652 aa).

Residues 29–33 (DSEYD), 78–79 (SL), and Glu107 each bind NAD(+). The active-site N6-AMP-lysine intermediate is the Lys109. Residues Arg130, Glu164, Lys278, and Lys302 each coordinate NAD(+). Residues Cys395, Cys398, Cys413, and Cys418 each coordinate Zn(2+). The BRCT domain occupies 577–652 (AADAVLSGKT…IQDEAWLEQL (76 aa)).

Belongs to the NAD-dependent DNA ligase family. LigA subfamily. Mg(2+) is required as a cofactor. Requires Mn(2+) as cofactor.

It catalyses the reaction NAD(+) + (deoxyribonucleotide)n-3'-hydroxyl + 5'-phospho-(deoxyribonucleotide)m = (deoxyribonucleotide)n+m + AMP + beta-nicotinamide D-nucleotide.. Functionally, DNA ligase that catalyzes the formation of phosphodiester linkages between 5'-phosphoryl and 3'-hydroxyl groups in double-stranded DNA using NAD as a coenzyme and as the energy source for the reaction. It is essential for DNA replication and repair of damaged DNA. The sequence is that of DNA ligase from Streptococcus gordonii (strain Challis / ATCC 35105 / BCRC 15272 / CH1 / DL1 / V288).